Here is a 148-residue protein sequence, read N- to C-terminus: Antitoxin Xre (148 aa).

It belongs to the MbcA/ParS/Xre antitoxin family. Homodimer. Forms a complex with cognate toxin Rse.

Antitoxin component of a type II toxin-antitoxin (TA) system. Neutralizes the NAD(+) depleting activity of cognate toxin Res. The sequence is that of Antitoxin Xre from Photorhabdus laumondii subsp. laumondii (strain DSM 15139 / CIP 105565 / TT01) (Photorhabdus luminescens subsp. laumondii).